Reading from the N-terminus, the 248-residue chain is Probable transcriptional regulatory protein PsycPRwf_1013 (248 aa).

It belongs to the TACO1 family.

The protein localises to the cytoplasm. This Psychrobacter sp. (strain PRwf-1) protein is Probable transcriptional regulatory protein PsycPRwf_1013.